A 1013-amino-acid polypeptide reads, in one-letter code: Receptor-type tyrosine-protein phosphatase N2 (1013 aa).

Residues 1-19 (MALPLLLLLLLLLPPRVLP) form the signal peptide. Residues 1–419 (MALPLLLLLL…PGALPFAKPL (419 aa)) are involved in localization to secretory granules; interaction with CPE. Residues 20–613 (AAPSSVPHGR…QAEQEDSTKF (594 aa)) are Extracellular-facing. Disordered regions lie at residues 116–137 (RHPE…ERRY), 273–302 (MPRP…TGEG), 342–382 (DHRG…VQDD), and 401–487 (LQDH…SLPA). Positions 419–430 (LKMERKKSERPE) are enriched in basic and acidic residues. A phosphoserine mark is found at Ser-434 and Ser-435. Asn-562 carries N-linked (GlcNAc...) asparagine glycosylation. A helical membrane pass occupies residues 614–634 (IALTLVSLACILGVLLASGLI). Topologically, residues 635–1013 (YCLRHSSQHR…VNAILKALPQ (379 aa)) are cytoplasmic. The short motif at 664-673 (YQELCRQRMA) is the Tyrosine-based internalization motif element. Residues 673–717 (ATRPPDRPEGPHTSRISSVSSQFSDGPMPSPSARSSASSWSEEPV) are disordered. Residues 686 to 696 (SRISSVSSQFS) are compositionally biased toward polar residues. Residues Ser-690 and Ser-696 each carry the phosphoserine modification. The span at 703–717 (PSARSSASSWSEEPV) shows a compositional bias: low complexity. The Tyrosine-protein phosphatase domain maps to 743–1003 (LEKEWEALCA…EFALTAVAEE (261 aa)). Substrate contacts are provided by residues Asp-911 and 943–949 (CSDGAGR). Catalysis depends on Cys-943, which acts as the Phosphocysteine intermediate. Position 968 is an N6-acetyllysine (Lys-968). Gln-988 contacts substrate. The short motif at 1002–1008 (EEVNAIL) is the Leucine-based sorting signal element.

It belongs to the protein-tyrosine phosphatase family. Receptor class 8 subfamily. In terms of assembly, self-associates. Interacts (via cytoplasmic domain) with PTPRN (via cytoplasmic domain). Interacts (precursor form) with CPE. Interacts with HAP1. Interacts with AP2A1 or AP2A2 and AP1G1; indicative for an association with adaptor protein complex 2 (AP-2) and adaptor protein complex 1 (AP-1). Interacts with AP2M1; indicative for an association with adaptor protein complex 2 (AP-2). Interacts with MYO5A. In terms of processing, subject to proteolytic cleavage at multiple sites. As to expression, detected in pancreatic islets and adrenal medulla.

The protein resides in the cytoplasmic vesicle. It localises to the secretory vesicle membrane. It is found in the secretory vesicle. Its subcellular location is the synaptic vesicle membrane. The enzyme catalyses O-phospho-L-tyrosyl-[protein] + H2O = L-tyrosyl-[protein] + phosphate. Functionally, plays a role in vesicle-mediated secretory processes. Required for normal accumulation of secretory vesicles in hippocampus, pituitary and pancreatic islets. Required for the accumulation of normal levels of insulin-containing vesicles and preventing their degradation. Plays a role in insulin secretion in response to glucose stimuli. Required for normal accumulation of the neurotransmitters norepinephrine, dopamine and serotonin in the brain. In females, but not in males, required for normal accumulation and secretion of pituitary hormones, such as luteinizing hormone (LH) and follicle-stimulating hormone (FSH). Required to maintain normal levels of renin expression and renin release. May regulate catalytic active protein-tyrosine phosphatases such as PTPRA through dimerization. Has phosphatidylinositol phosphatase activity; the PIPase activity is involved in its ability to regulate insulin secretion. Can dephosphorylate phosphatidylinositol 4,5-biphosphate, phosphatidylinositol 5-phosphate and phosphatidylinositol 3-phosphate. Regulates PI(4,5)P2 level in the plasma membrane and localization of cofilin at the plasma membrane and thus is indirectly involved in regulation of actin dynamics related to cell migration and metastasis; upon hydrolysis of PI(4,5)P2 cofilin is released from the plasma membrane and acts in the cytoplasm in severing F-actin filaments. The polypeptide is Receptor-type tyrosine-protein phosphatase N2 (PTPRN2) (Macaca nemestrina (Pig-tailed macaque)).